The primary structure comprises 248 residues: Anamorsin homolog (248 aa).

Positions 4–129 (FKGLQKTLYI…ETGSSARLSF (126 aa)) are N-terminal SAM-like domain. The tract at residues 130 to 161 (AKKDASALNVWKISGDDEELIDEEDLLDEEDK) is linker. The [2Fe-2S] cluster site is built by cysteine 172, cysteine 181, cysteine 184, and cysteine 186. Residues 172–186 (CSTTGKRKACKNCSC) form a fe-S binding site A region. [4Fe-4S] cluster-binding residues include cysteine 209, cysteine 212, cysteine 220, and cysteine 223. 2 short sequence motifs (cx2C motif) span residues 209-212 (CGNC) and 220-223 (CSTC). The tract at residues 209–223 (CGNCYLGDAFRCSTC) is fe-S binding site B.

The protein belongs to the anamorsin family. As to quaternary structure, monomer. The cofactor is [2Fe-2S] cluster. Requires [4Fe-4S] cluster as cofactor.

The protein localises to the cytoplasm. It is found in the mitochondrion intermembrane space. In terms of biological role, component of the cytosolic iron-sulfur (Fe-S) protein assembly (CIA) machinery. Required for the maturation of extramitochondrial Fe-S proteins. Part of an electron transfer chain functioning in an early step of cytosolic Fe-S biogenesis, facilitating the de novo assembly of a [4Fe-4S] cluster on the cytosolic Fe-S scaffold complex. Electrons are transferred from NADPH via a FAD- and FMN-containing diflavin oxidoreductase. Together with the diflavin oxidoreductase, also required for the assembly of the diferric tyrosyl radical cofactor of ribonucleotide reductase (RNR), probably by providing electrons for reduction during radical cofactor maturation in the catalytic small subunit. The polypeptide is Anamorsin homolog (Drosophila ananassae (Fruit fly)).